Reading from the N-terminus, the 282-residue chain is Elongation factor Ts (282 aa).

The interval 80–83 (TDFV) is involved in Mg(2+) ion dislocation from EF-Tu.

Belongs to the EF-Ts family.

The protein resides in the cytoplasm. Associates with the EF-Tu.GDP complex and induces the exchange of GDP to GTP. It remains bound to the aminoacyl-tRNA.EF-Tu.GTP complex up to the GTP hydrolysis stage on the ribosome. In Chlamydia caviae (strain ATCC VR-813 / DSM 19441 / 03DC25 / GPIC) (Chlamydophila caviae), this protein is Elongation factor Ts.